Reading from the N-terminus, the 101-residue chain is Omega-scoloptoxin(10)-Ssd1b (101 aa).

Residues 1-23 (MNKLTIIFFTILLLTYIIVEKEA) form the signal peptide.

Contains 3 disulfide bonds. In terms of tissue distribution, expressed by the venom gland.

Its subcellular location is the secreted. Its function is as follows. Voltage-gated calcium channel inhibitor. This is Omega-scoloptoxin(10)-Ssd1b from Scolopendra dehaani (Thai centipede).